Reading from the N-terminus, the 236-residue chain is NAD-dependent protein deacetylase (236 aa).

A Deacetylase sirtuin-type domain is found at 1–236; that stretch reads MIKDWLQESN…EFLRSISNEG (236 aa). NAD(+) is bound by residues alanine 18, threonine 22, phenylalanine 29, arginine 30, glutamine 96, valine 98, aspartate 99, and histidine 114. Phenylalanine 29 contributes to the nicotinamide binding site. Nicotinamide is bound by residues valine 98 and aspartate 99. Catalysis depends on histidine 114, which acts as the Proton acceptor. 4 residues coordinate Zn(2+): cysteine 122, cysteine 125, cysteine 141, and cysteine 143. Residues serine 181, serine 182, asparagine 206, and isoleucine 225 each coordinate NAD(+).

It belongs to the sirtuin family. Class U subfamily. The cofactor is Zn(2+).

The protein localises to the cytoplasm. It carries out the reaction N(6)-acetyl-L-lysyl-[protein] + NAD(+) + H2O = 2''-O-acetyl-ADP-D-ribose + nicotinamide + L-lysyl-[protein]. Functionally, NAD-dependent protein deacetylase which modulates the activities of several enzymes which are inactive in their acetylated form. The polypeptide is NAD-dependent protein deacetylase (Oceanobacillus iheyensis (strain DSM 14371 / CIP 107618 / JCM 11309 / KCTC 3954 / HTE831)).